The chain runs to 514 residues: ATP synthase subunit alpha (514 aa).

170–177 lines the ATP pocket; the sequence is GDRQIGKT.

Belongs to the ATPase alpha/beta chains family. As to quaternary structure, F-type ATPases have 2 components, CF(1) - the catalytic core - and CF(0) - the membrane proton channel. CF(1) has five subunits: alpha(3), beta(3), gamma(1), delta(1), epsilon(1). CF(0) has three main subunits: a(1), b(2) and c(9-12). The alpha and beta chains form an alternating ring which encloses part of the gamma chain. CF(1) is attached to CF(0) by a central stalk formed by the gamma and epsilon chains, while a peripheral stalk is formed by the delta and b chains.

The protein localises to the cell inner membrane. The enzyme catalyses ATP + H2O + 4 H(+)(in) = ADP + phosphate + 5 H(+)(out). In terms of biological role, produces ATP from ADP in the presence of a proton gradient across the membrane. The alpha chain is a regulatory subunit. This Ectopseudomonas mendocina (strain ymp) (Pseudomonas mendocina) protein is ATP synthase subunit alpha.